We begin with the raw amino-acid sequence, 974 residues long: Localization factor PodJL (974 aa).

3 coiled-coil regions span residues 81 to 163, 218 to 320, and 375 to 469; these read DEVG…EAAG, VARL…SAQA, and QAQA…LEAA. Disordered stretches follow at residues 460-497 and 589-611; these read SEAQ…SPFE and AAAR…KKEK. Residues 589 to 598 show a composition bias toward low complexity; the sequence is AAARAAAASE. A helical membrane pass occupies residues 642–662; it reads ALVVFAAAGALGAGVGGLLLL. Sel1-like repeat units lie at residues 757–793, 794–829, and 830–865; these read PAAQ…NGGD, PRAM…DMGL, and VDSQ…RAGD.

In terms of processing, two isoforms exist, the full-length translation product PodJL and a C-terminal truncated form PodJS. Both appear during a specific time period of the cell cycle to control different aspects of polar organelle development.

Its subcellular location is the membrane. PodJL provides the positional information for the localization of several polar organelles (pili, adhesive holdfast and chemotactic apparatus) by recruiting structural (CpaE) and regulatory (PleC) proteins to a specific cell pole. This is Localization factor PodJL (podJ) from Caulobacter vibrioides (strain ATCC 19089 / CIP 103742 / CB 15) (Caulobacter crescentus).